A 297-amino-acid polypeptide reads, in one-letter code: Acetaldehyde dehydrogenase (297 aa).

The active-site Acyl-thioester intermediate is the Cys128. NAD(+) contacts are provided by residues 159–167 (SAGPGTRQN) and Asn272.

The protein belongs to the acetaldehyde dehydrogenase family.

It carries out the reaction acetaldehyde + NAD(+) + CoA = acetyl-CoA + NADH + H(+). This chain is Acetaldehyde dehydrogenase, found in Desulfitobacterium hafniense (strain DSM 10664 / DCB-2).